We begin with the raw amino-acid sequence, 128 residues long: MGDPRCAPLLLLLLLPLLFTPPAGDAAVITGACDKDSQCGGGMCCAVSIWVKSIRICTPMGQVGDSCHPLTRKSHVANGRQERRRAKRRKRKKEVPFWGRRMHHTCPCLPGLACLRTSFNRFICLARK.

The signal sequence occupies residues 1–26; sequence MGDPRCAPLLLLLLLPLLFTPPAGDA. Intrachain disulfides connect Cys33–Cys45, Cys39–Cys57, Cys44–Cys106, Cys67–Cys114, and Cys108–Cys124.

It belongs to the AVIT (prokineticin) family. Expressed in the SCN and among a few other discrete brain areas, including the islands of Calleja, media l preoptic area of the hypothalamus and the shell of the nucleus accumbens. Highly expressed in testis. In the SCN, expression subjected to high amplitude of circadian oscillation.

The protein resides in the secreted. Functionally, may function as an output molecule from the suprachiasmatic nucleus (SCN) that transmits behavioral circadian rhythm. May also function locally within the SCN to synchronize output. Potently contracts gastrointestinal (GI) smooth muscle. The protein is Prokineticin-2 (Prok2) of Mus musculus (Mouse).